A 574-amino-acid chain; its full sequence is Streptolysin O (574 aa).

The first 36 residues, 1-36 (MKDMSNKKIFKKYSRVAGLLTAALIVGNLVTANADS), serve as a signal peptide directing secretion. Residues 37 to 52 (NKQNTANTETTTTNEQ) show a composition bias toward low complexity. Disordered stretches follow at residues 37 to 64 (NKQNTANTETTTTNEQPKPESSELTTEK) and 84 to 111 (KEMPLESAEKEEKKSEDNKKSEEDHTEE). Positions 53–64 (PKPESSELTTEK) are enriched in basic and acidic residues. 4 consecutive transmembrane segments (beta stranded) span residues 263 to 276 (KSQIEAALNVNSKI), 283 to 292 (IDFKSISKGE), 361 to 370 (SNDVEAAFSA), and 378 to 390 (KTNGKYSDILENS). A Conserved undecapeptide motif is present at residues 532 to 542 (ECTGLAWEWWR). The short motif at 564 to 565 (TL) is the Cholesterol binding element.

This sequence belongs to the cholesterol-dependent cytolysin family. In terms of assembly, homooligomeric pore complex of 35 to 50 subunits; when inserted in the host membrane.

The protein resides in the secreted. Its subcellular location is the host cell membrane. Functionally, a cholesterol-dependent toxin that causes cytolysis by forming pores in cholesterol containing host membranes. After binding to target membranes, the protein undergoes a major conformation change, leading to its insertion in the host membrane and formation of an oligomeric pore complex. Cholesterol is required for binding to host membranes, membrane insertion and pore formation; cholesterol binding is mediated by a Thr-Leu pair in the C-terminus. Can be reversibly inactivated by oxidation. This is Streptolysin O (slo) from Streptococcus dysgalactiae subsp. equisimilis (Streptococcus equisimilis).